The chain runs to 306 residues: Palmitoyl-protein thioesterase 1 (306 aa).

The N-terminal stretch at 1–27 (MASSCSRRLLAAALLPWCCAAWALGHL) is a signal peptide. Disulfide bonds link Cys-45/Cys-46, Cys-96/Cys-128, and Cys-152/Cys-160. Ser-115 is an active-site residue. N-linked (GlcNAc...) asparagine glycosylation is found at Asn-197, Asn-212, and Asn-232. Active-site residues include Asp-233 and His-289.

This sequence belongs to the palmitoyl-protein thioesterase family. As to quaternary structure, interacts with CLN5, ATP5F1A and ATP5F1B. Post-translationally, glycosylated. In terms of tissue distribution, highest level in testis and kidney, lower in heart, brain and lung and lowest in skeletal muscle.

It is found in the lysosome. The protein localises to the secreted. The protein resides in the golgi apparatus. It localises to the endoplasmic reticulum. It carries out the reaction S-hexadecanoyl-L-cysteinyl-[protein] + H2O = L-cysteinyl-[protein] + hexadecanoate + H(+). It catalyses the reaction hexadecanoyl-CoA + H2O = hexadecanoate + CoA + H(+). The enzyme catalyses S-hexadecanoyl-N-acetylcysteamine + H2O = N-acetylcysteamine + hexadecanoate + H(+). The catalysed reaction is S-hexadecanoyl-N-acetylcysteine methyl ester + H2O = N-acetylcysteine methyl ester + hexadecanoate + H(+). In terms of biological role, has thioesterase activity against fatty acid thioesters with 14 -18 carbons, including palmitoyl-CoA, S-palmitoyl-N-acetylcysteamine, and palmitoylated proteins. In contrast to PPT2, PPT1 can hydrolyze palmitoylated proteins and palmitoylcysteine. The sequence is that of Palmitoyl-protein thioesterase 1 (Ppt1) from Mus musculus (Mouse).